A 128-amino-acid chain; its full sequence is Small ribosomal subunit protein bS6 (128 aa).

This sequence belongs to the bacterial ribosomal protein bS6 family.

Binds together with bS18 to 16S ribosomal RNA. The chain is Small ribosomal subunit protein bS6 from Thermotoga petrophila (strain ATCC BAA-488 / DSM 13995 / JCM 10881 / RKU-1).